Reading from the N-terminus, the 249-residue chain is Protection of telomeres protein poz1 (249 aa).

Interacts with pot1, rap1 and tpz1.

The protein resides in the cytoplasm. Its subcellular location is the nucleus. The protein localises to the chromosome. It localises to the telomere. In terms of biological role, telomeric DNA-binding protein that negatively regulates telomerase and telomere length. This is Protection of telomeres protein poz1 (poz1) from Schizosaccharomyces pombe (strain 972 / ATCC 24843) (Fission yeast).